Here is an 804-residue protein sequence, read N- to C-terminus: Phosphatidylinositol 4-kinase beta (804 aa).

Positions 55–245 constitute a PIK helical domain; sequence LEKVKMIHGS…GTKLRKLILS (191 aa). Disordered stretches follow at residues 69–122 and 251–309; these read LDKV…ARRR and AHKK…EPVR. Composition is skewed to polar residues over residues 91-103 and 281-300; these read KLTN…TSSR and DATV…SNPK. Residues 523 to 789 form the PI3K/PI4K catalytic domain; it reads EPWEEKVRRI…MVDGSMRSIT (267 aa). The G-loop stretch occupies residues 529–535; the sequence is VRRIREG. Positions 656-664 are catalytic loop; sequence QVKDRHNGN. The segment at 675 to 699 is activation loop; that stretch reads HIDFGFILSSSPRNLGFETSAFKLT.

This sequence belongs to the PI3/PI4-kinase family. Type III PI4K subfamily. Requires Mg(2+) as cofactor. It depends on Mn(2+) as a cofactor.

The protein localises to the endomembrane system. It localises to the mitochondrion outer membrane. Its subcellular location is the rough endoplasmic reticulum membrane. The enzyme catalyses a 1,2-diacyl-sn-glycero-3-phospho-(1D-myo-inositol) + ATP = a 1,2-diacyl-sn-glycero-3-phospho-(1D-myo-inositol 4-phosphate) + ADP + H(+). Phosphorylates phosphatidylinositol (PI) in the first committed step in the production of the second messenger inositol-1,4,5,-trisphosphate (PIP). May play an important role in the inner ear development. The sequence is that of Phosphatidylinositol 4-kinase beta (pi4kb) from Xenopus laevis (African clawed frog).